The following is a 340-amino-acid chain: Methionine import ATP-binding protein MetN (340 aa).

Positions 5-243 (IEFRGVTKSF…PQTTTARRFV (239 aa)) constitute an ABC transporter domain. ATP is bound at residue 40–47 (GYSGAGKS).

The protein belongs to the ABC transporter superfamily. Methionine importer (TC 3.A.1.24) family. The complex is composed of two ATP-binding proteins (MetN), two transmembrane proteins (MetI) and a solute-binding protein (MetQ).

It is found in the cell membrane. The enzyme catalyses L-methionine(out) + ATP + H2O = L-methionine(in) + ADP + phosphate + H(+). It carries out the reaction D-methionine(out) + ATP + H2O = D-methionine(in) + ADP + phosphate + H(+). Its function is as follows. Part of the ABC transporter complex MetNIQ involved in methionine import. Responsible for energy coupling to the transport system. This is Methionine import ATP-binding protein MetN from Leifsonia xyli subsp. xyli (strain CTCB07).